Reading from the N-terminus, the 178-residue chain is Adenine phosphoribosyltransferase (178 aa).

The protein belongs to the purine/pyrimidine phosphoribosyltransferase family. As to quaternary structure, homodimer.

It is found in the cytoplasm. The catalysed reaction is AMP + diphosphate = 5-phospho-alpha-D-ribose 1-diphosphate + adenine. The protein operates within purine metabolism; AMP biosynthesis via salvage pathway; AMP from adenine: step 1/1. Its function is as follows. Catalyzes a salvage reaction resulting in the formation of AMP, that is energically less costly than de novo synthesis. This Cereibacter sphaeroides (strain ATCC 17023 / DSM 158 / JCM 6121 / CCUG 31486 / LMG 2827 / NBRC 12203 / NCIMB 8253 / ATH 2.4.1.) (Rhodobacter sphaeroides) protein is Adenine phosphoribosyltransferase.